The following is a 309-amino-acid chain: Tagatose-6-phosphate kinase (309 aa).

This sequence belongs to the carbohydrate kinase PfkB family. LacC subfamily.

The enzyme catalyses D-tagatofuranose 6-phosphate + ATP = D-tagatofuranose 1,6-bisphosphate + ADP + H(+). It functions in the pathway carbohydrate metabolism; D-tagatose 6-phosphate degradation; D-glyceraldehyde 3-phosphate and glycerone phosphate from D-tagatose 6-phosphate: step 1/2. The chain is Tagatose-6-phosphate kinase from Streptococcus pyogenes serotype M18 (strain MGAS8232).